We begin with the raw amino-acid sequence, 382 residues long: Na(+)/H(+) antiporter NhaA (382 aa).

Helical transmembrane passes span 14-34, 49-69, 87-107, 117-137, 146-166, 171-191, 205-225, 247-267, 285-305, 321-341, and 356-376; these read AGGI…NSSF, MSVS…LIGL, IFPA…YVAF, GWAI…ALLG, VFLL…IAFF, LSVL…LLNS, FILW…GVVL, ALHP…NAGI, VALG…YVAV, IFAV…ISSL, and LGIL…LHIS.

This sequence belongs to the NhaA Na(+)/H(+) (TC 2.A.33) antiporter family.

It is found in the cell inner membrane. The catalysed reaction is Na(+)(in) + 2 H(+)(out) = Na(+)(out) + 2 H(+)(in). In terms of biological role, na(+)/H(+) antiporter that extrudes sodium in exchange for external protons. This chain is Na(+)/H(+) antiporter NhaA, found in Aliivibrio salmonicida (strain LFI1238) (Vibrio salmonicida (strain LFI1238)).